The following is a 238-amino-acid chain: Ribonuclease PH (238 aa).

Phosphate is bound by residues R86 and 124–126; that span reads GTR.

Belongs to the RNase PH family. As to quaternary structure, homohexameric ring arranged as a trimer of dimers.

It catalyses the reaction tRNA(n+1) + phosphate = tRNA(n) + a ribonucleoside 5'-diphosphate. Its function is as follows. Phosphorolytic 3'-5' exoribonuclease that plays an important role in tRNA 3'-end maturation. Removes nucleotide residues following the 3'-CCA terminus of tRNAs; can also add nucleotides to the ends of RNA molecules by using nucleoside diphosphates as substrates, but this may not be physiologically important. Probably plays a role in initiation of 16S rRNA degradation (leading to ribosome degradation) during starvation. In Alkalilimnicola ehrlichii (strain ATCC BAA-1101 / DSM 17681 / MLHE-1), this protein is Ribonuclease PH.